The sequence spans 953 residues: MNIRKPLCSNSVVGACTLISLTTAVILGHLMLRELMLLPQDLHESSSGLWKTYRPHHQEGYKPGPLHIQEQTEQPKEAPTQCDVPPSSRFDCAPDKGISQEQCEARGCCYVPAGQVLKEPQIGQPWCFFPPSYPSYRLENLSSTESGYTATLTRTSPTFFPKDVLTLQLEVLMETDSRLHFKIKDPASKRYEVPLETPRVLSQAPSPLYSVEFSEEPFGVIVRRKLGGRVLLNTTVAPLFFADQFLQLSTSLPSQHITGLGEHLSPLMLSTDWARITLWNRDTPPSQGTNLYGSHPFYLALEDGGLAHGVFLLNSNAMDVILQPSPALTWRSTGGILDVYVFLGPEPKSVVQQYLDVVGYPFMPPYWGLGFHLCRWGYSSTAIVRQVVENMTRTHFPLDVQWNDLDYMDARRDFTFNQDSFADFPDMVRELHQDGRRYMMIVDPAISSAGPAGSYRPYDEGLRRGVFITNETGQPLIGKVWPGTTAFPDFTNPETLDWWQDMVSEFHAQVPFDGMWLDMNEPSNFVRGSQQGCPNNELENPPYVPGVVGGILQAATICASSHQFLSTHYNLHNLYGLTEAIASSRALVKTRGTRPFVISRSTFSGHGRYAGHWTGDVRSSWEHLAYSVPDILQFNLLGVPLVGADICGFIGDTSEELCVRWTQLGAFYPFMRNHNDLNSVPQEPYRFSETAQQAMRKAFALRYALLPYLYTLFHRAHVRGDTVARPLFLEFPEDPSTWSVDRQLLWGPALLITPVLEPGKTEVTGYFPKGTWYNMQMVSVDSLGTLPSPSSASSFRSAVQSKGQWLTLEAPLDTINVHLREGYIIPLQGPSLTTTESRKQPMALAVALTASGEADGELFWDDGESLAVLERGAYTLVTFSAKNNTIVNKLVRVTKEGAELQLREVTVLGVATAPTQVLSNGIPVSNFTYSPDNKSLAIPVSLLMGELFQISWS.

A signal peptide spans 1 to 27; that stretch reads MNIRKPLCSNSVVGACTLISLTTAVIL. Residues 28–69 constitute a propeptide that is removed on maturation; the sequence is GHLMLRELMLLPQDLHESSSGLWKTYRPHHQEGYKPGPLHIQ. The P-type domain occupies 80–131; that stretch reads TQCDVPPSSRFDCAPDKGISQEQCEARGCCYVPAGQVLKEPQIGQPWCFFPP. 3 disulfide bridges follow: C82–C109, C92–C108, and C103–C127. 3 N-linked (GlcNAc...) asparagine glycosylation sites follow: N140, N233, and N390. D404 lines the substrate pocket. A glycan (N-linked (GlcNAc...) asparagine) is linked at N470. D518 (nucleophile) is an active-site residue. E521 is a catalytic residue. An intrachain disulfide couples C533 to C558. Substrate is bound by residues R600 and D616. Residues C647 and C658 are joined by a disulfide bond. H674 serves as a coordination point for substrate. Residues N883, N926, and N933 are each glycosylated (N-linked (GlcNAc...) asparagine).

Belongs to the glycosyl hydrolase 31 family.

The protein localises to the lysosome. It is found in the lysosome membrane. It carries out the reaction Hydrolysis of terminal, non-reducing (1-&gt;4)-linked alpha-D-glucose residues with release of alpha-D-glucose.. Functionally, essential for the degradation of glycogen in lysosomes. Has highest activity on alpha-1,4-linked glycosidic linkages, but can also hydrolyze alpha-1,6-linked glucans. This chain is Lysosomal alpha-glucosidase (Gaa), found in Mus musculus (Mouse).